Consider the following 211-residue polypeptide: WUSCHEL-related homeobox 14 (211 aa).

The segment at residues 91–155 is a DNA-binding region (homeobox; WUS-type); that stretch reads STRHRWTPTS…NRRARSKRKQ (65 aa). A disordered region spans residues 147–183; the sequence is RRARSKRKQPQTTTANGQADDVAVTTEERRSCGDSGG.

The protein belongs to the WUS homeobox family. In terms of tissue distribution, expressed in root vasculature, pericycle and stamen. Expressed in the procambium during stem maturation.

The protein resides in the nucleus. Acts redundantly with WOX4 downstream of the TDR/PXY receptor kinase to regulate procambial cell proliferation and differentiation in vascular tissue, independently of any role in vascular. Involved in the regulation of gibberellin (GA) biosynthesis pathway. Positively regulates the expression of the GA biosynthesis gene GA3OX1, and negatively regulates the expression of GA2OX1 during secondary growth, which increases bioactive GA content in the inflorescence stem. Promotes vascular cell differentiation in the inflorescence stem. In terms of biological role, transcription factor which may be involved in developmental processes. The protein is WUSCHEL-related homeobox 14 (WOX14) of Arabidopsis thaliana (Mouse-ear cress).